The primary structure comprises 501 residues: Cytochrome P450 monooxygenase janQ (501 aa).

A helical membrane pass occupies residues 1–16; the sequence is MVLGLLAFIWLMRAWR. Asn132 carries an N-linked (GlcNAc...) asparagine glycan. Cys439 is a heme binding site.

Belongs to the cytochrome P450 family. Requires heme as cofactor.

Its subcellular location is the membrane. Its pathway is secondary metabolite biosynthesis. Cytochrome P450 monooxygenase; part of the gene cluster that mediates the biosynthesis of the indole diterpenes janthitremanes such as shearinine K or shearinine A. The geranylgeranyl diphosphate (GGPP) synthase janG catalyzes the first step in janthitremane biosynthesis via conversion of farnesyl pyrophosphate and isopentyl pyrophosphate into geranylgeranyl pyrophosphate (GGPP). Condensation of indole-3-glycerol phosphate with GGPP by the prenyl transferase janC then forms 3-geranylgeranylindole (3-GGI). Epoxidation by the FAD-dependent monooxygenase janM leads to a epoxidized-GGI that is substrate of the terpene cyclase janB for cyclization to yield paspaline. Paspaline is subsequently converted to 13-desoxypaspaline by the cytochrome P450 monooxygenase janP, via beta-PC-M6 in a series of alpha-face oxidations. The cytochrome P450 monooxygenase janQ is proposed to carry out sequential beta-face oxidation steps at C-7 and C-13 of 13-desoxypaspaline to form paspalicine and paspalinine respectively. The indole diterpene prenyltransferase janD may then convert paspalinine into shearinine K which is substrate of janO and/or additional enzymes for oxidation and cyclization to generate shearinine A. This chain is Cytochrome P450 monooxygenase janQ, found in Penicillium janthinellum (Penicillium vitale).